Here is a 254-residue protein sequence, read N- to C-terminus: MRILLTNDDGIHAPGMAVLERIARALSDDITIVAPNSERSGAGRSLTLTRPLRLRQLGEKRFAVAGTPTDAVMMALARVMKDAPPELILSGVNRGANLGEDVSYSGTVSAAMEGALAGIPSIALSQVYAREGAGLNVSFAAAEAWGAKVLRPLLDAPWAPRSLYNVNFPAREPEQVLGIRVVPQGLRDYGQTEILQRTDPRGFDYYWIKLAGMPSTPAHSTDLEAAADGWVTVTPLHCDMTNHAALAATTALYR.

Residues aspartate 8, aspartate 9, serine 40, and asparagine 93 each coordinate a divalent metal cation.

This sequence belongs to the SurE nucleotidase family. It depends on a divalent metal cation as a cofactor.

The protein resides in the cytoplasm. The enzyme catalyses a ribonucleoside 5'-phosphate + H2O = a ribonucleoside + phosphate. Its function is as follows. Nucleotidase that shows phosphatase activity on nucleoside 5'-monophosphates. The chain is 5'-nucleotidase SurE from Rhizorhabdus wittichii (strain DSM 6014 / CCUG 31198 / JCM 15750 / NBRC 105917 / EY 4224 / RW1) (Sphingomonas wittichii).